Consider the following 545-residue polypeptide: Betaine receptor acr-23 (545 aa).

An N-terminal signal peptide occupies residues 1 to 19; the sequence is MHRIYTFLIFISQLALGLS. Residues 20–244 lie on the Extracellular side of the membrane; that stretch reads NNPDIPIQYE…DVVIQRKPLY (225 aa). Residues asparagine 53 and asparagine 97 are each glycosylated (N-linked (GlcNAc...) asparagine). Cystine bridges form between cysteine 157-cysteine 171 and cysteine 224-cysteine 225. Asparagine 228 carries an N-linked (GlcNAc...) asparagine glycan. A helical transmembrane segment spans residues 245 to 265; that stretch reads YVLNLIAPTAVITFISIIGFF. N-linked (GlcNAc...) asparagine glycosylation is present at asparagine 276. The next 2 membrane-spanning stretches (helical) occupy residues 287 to 307 and 317 to 337; these read EKIT…FMVS and VPLI…GTLA. Topologically, residues 338–512 are cytoplasmic; the sequence is ASSVIFVQKL…WDWVAAVLER (175 aa). A helical transmembrane segment spans residues 513-533; the sequence is VFLIFFTICFLFSAIGINLYG.

This sequence belongs to the ligand-gated ion channel (TC 1.A.9) family. Acetylcholine receptor (TC 1.A.9.1) subfamily. In terms of tissue distribution, expressed in the body wall muscles that are arranged into four longitudinal bundles, some mechanosensory neurons, the head muscles and multiple interneurons. Not expressed in motor neurons (at protein level).

Its subcellular location is the cell membrane. Its function is as follows. Betaine receptor that functions as a ligand-gated non-selective monovalent cation channel in mechanosensory neurons to maintain basal levels of locomotion. The channel is permeable to Na(+) and K(+) but not to Ba(2+) or Ca(2+) ions. Elicits current in response to betaine, very weak current in response to choline, virtually no current in response to acetylcholine and nicotine, and no current in response to glycine and GABA. The polypeptide is Betaine receptor acr-23 (Caenorhabditis elegans).